The sequence spans 2513 residues: Probable polyketide synthase 7 (2513 aa).

A Ketosynthase family 3 (KS3) domain is found at 11 to 441 (EKGVAIVGIG…GSNCCLLISE (431 aa)). Catalysis depends on for beta-ketoacyl synthase activity residues Cys-181, His-323, and His-362. An acyl/malonyl transferase region spans residues 632 to 665 (GVNPSFILGHSLGEISASYCSGMIDLDTFCYTVY). The active-site For acyl/malonyl transferase activity is Ser-642. Residues 922–1044 (IDHLGISNSF…SNFQLLDHGN (123 aa)) are N-terminal hotdog fold. One can recognise a PKS/mFAS DH domain in the interval 922–1206 (IDHLGISNSF…CKSLIPIKDS (285 aa)). The active-site Proton acceptor; for dehydratase activity is His-956. The C-terminal hotdog fold stretch occupies residues 1061–1206 (NLSKLTKNEL…CKSLIPIKDS (146 aa)). The active-site Proton donor; for dehydratase activity is the Asp-1119. The region spanning 2426 to 2503 (IGNKNIDELF…ISIKMILNSL (78 aa)) is the Carrier domain. Ser-2463 bears the O-(pantetheine 4'-phosphoryl)serine mark.

Pantetheine 4'-phosphate serves as cofactor.

Probable polyketide synthase. The chain is Probable polyketide synthase 7 (pks7) from Dictyostelium discoideum (Social amoeba).